Here is a 403-residue protein sequence, read N- to C-terminus: ATP phosphoribosyltransferase regulatory subunit (403 aa).

The protein belongs to the class-II aminoacyl-tRNA synthetase family. HisZ subfamily. As to quaternary structure, heteromultimer composed of HisG and HisZ subunits.

It localises to the cytoplasm. Its pathway is amino-acid biosynthesis; L-histidine biosynthesis; L-histidine from 5-phospho-alpha-D-ribose 1-diphosphate: step 1/9. Required for the first step of histidine biosynthesis. May allow the feedback regulation of ATP phosphoribosyltransferase activity by histidine. The sequence is that of ATP phosphoribosyltransferase regulatory subunit from Crocosphaera subtropica (strain ATCC 51142 / BH68) (Cyanothece sp. (strain ATCC 51142)).